Consider the following 171-residue polypeptide: 3-hydroxydecanoyl-[acyl-carrier-protein] dehydratase (171 aa).

The active site involves His70.

The protein belongs to the thioester dehydratase family. FabA subfamily. As to quaternary structure, homodimer.

The protein localises to the cytoplasm. It carries out the reaction a (3R)-hydroxyacyl-[ACP] = a (2E)-enoyl-[ACP] + H2O. The enzyme catalyses (3R)-hydroxydecanoyl-[ACP] = (2E)-decenoyl-[ACP] + H2O. The catalysed reaction is (2E)-decenoyl-[ACP] = (3Z)-decenoyl-[ACP]. Its pathway is lipid metabolism; fatty acid biosynthesis. Its function is as follows. Necessary for the introduction of cis unsaturation into fatty acids. Catalyzes the dehydration of (3R)-3-hydroxydecanoyl-ACP to E-(2)-decenoyl-ACP and then its isomerization to Z-(3)-decenoyl-ACP. Can catalyze the dehydratase reaction for beta-hydroxyacyl-ACPs with saturated chain lengths up to 16:0, being most active on intermediate chain length. In Chromohalobacter salexigens (strain ATCC BAA-138 / DSM 3043 / CIP 106854 / NCIMB 13768 / 1H11), this protein is 3-hydroxydecanoyl-[acyl-carrier-protein] dehydratase.